The primary structure comprises 386 residues: Succinate--CoA ligase [ADP-forming] subunit beta (386 aa).

Residues 9–237 enclose the ATP-grasp domain; sequence KEVLRDFGVN…LSAEHPLEVE (229 aa). Residues lysine 45, 52-54, valine 94, and glutamate 101 contribute to the ATP site; that span reads GRG. Mg(2+)-binding residues include asparagine 192 and aspartate 206. Substrate-binding positions include asparagine 258 and 315–317; that span reads GIT.

It belongs to the succinate/malate CoA ligase beta subunit family. In terms of assembly, heterotetramer of two alpha and two beta subunits. Mg(2+) is required as a cofactor.

It carries out the reaction succinate + ATP + CoA = succinyl-CoA + ADP + phosphate. The enzyme catalyses GTP + succinate + CoA = succinyl-CoA + GDP + phosphate. Its pathway is carbohydrate metabolism; tricarboxylic acid cycle; succinate from succinyl-CoA (ligase route): step 1/1. In terms of biological role, succinyl-CoA synthetase functions in the citric acid cycle (TCA), coupling the hydrolysis of succinyl-CoA to the synthesis of either ATP or GTP and thus represents the only step of substrate-level phosphorylation in the TCA. The beta subunit provides nucleotide specificity of the enzyme and binds the substrate succinate, while the binding sites for coenzyme A and phosphate are found in the alpha subunit. The protein is Succinate--CoA ligase [ADP-forming] subunit beta of Deinococcus radiodurans (strain ATCC 13939 / DSM 20539 / JCM 16871 / CCUG 27074 / LMG 4051 / NBRC 15346 / NCIMB 9279 / VKM B-1422 / R1).